We begin with the raw amino-acid sequence, 548 residues long: Protoporphyrinogen oxidase, chloroplastic (548 aa).

A chloroplast-targeting transit peptide spans 1 to 50 (MTTTPIANHPNIFTHQSSSSPLAFLNRTSFIPFSSISKRNSVNCNGWRTR). FAD is bound by residues 78–83 (GAGISG), 101–102 (EA), and 123–126 (GPNS). Residues 265–279 (KERSSTPKAPRDPRL) show a composition bias toward basic and acidic residues. The interval 265 to 287 (KERSSTPKAPRDPRLPKPKGQTV) is disordered. An FAD-binding site is contributed by 522-524 (VAL).

Belongs to the protoporphyrinogen/coproporphyrinogen oxidase family. Protoporphyrinogen oxidase subfamily. Homodimer. It depends on FAD as a cofactor.

The protein resides in the plastid. It localises to the chloroplast. The enzyme catalyses protoporphyrinogen IX + 3 O2 = protoporphyrin IX + 3 H2O2. Its pathway is porphyrin-containing compound metabolism; protoporphyrin-IX biosynthesis; protoporphyrin-IX from protoporphyrinogen-IX: step 1/1. It functions in the pathway porphyrin-containing compound metabolism; chlorophyll biosynthesis. Its function is as follows. Catalyzes the 6-electron oxidation of protoporphyrinogen-IX to form protoporphyrin-IX. This Nicotiana tabacum (Common tobacco) protein is Protoporphyrinogen oxidase, chloroplastic (PPXI).